Here is a 440-residue protein sequence, read N- to C-terminus: Adenylyltransferase and sulfurtransferase UBA4 (440 aa).

An N-acetylmethionine modification is found at Met-1. Residues Gly-77, Asp-98, Ser-105–Arg-109, Lys-122, and Asp-166–Ser-167 each bind ATP. Zn(2+) contacts are provided by Cys-208 and Cys-211. Catalysis depends on Cys-225, which acts as the Glycyl thioester intermediate; for adenylyltransferase activity. Zn(2+) contacts are provided by Cys-286 and Cys-289. Ser-326 is subject to Phosphoserine. A Rhodanese domain is found at Phe-339–Pro-438. Cys-397 acts as the Cysteine persulfide intermediate; for sulfurtransferase activity in catalysis.

It in the N-terminal section; belongs to the HesA/MoeB/ThiF family. UBA4 subfamily. It depends on Zn(2+) as a cofactor.

Its subcellular location is the cytoplasm. It is found in the cytosol. It participates in tRNA modification; 5-methoxycarbonylmethyl-2-thiouridine-tRNA biosynthesis. In terms of biological role, plays a central role in 2-thiolation of mcm(5)S(2)U at tRNA wobble positions of cytosolic tRNA(Lys), tRNA(Glu) and tRNA(Gln). Acts by mediating the C-terminal thiocarboxylation of sulfur carrier URM1. Its N-terminus first activates URM1 as acyl-adenylate (-COAMP), then the persulfide sulfur on the catalytic cysteine is transferred to URM1 to form thiocarboxylation (-COSH) of its C-terminus. The reaction probably involves hydrogen sulfide that is generated from the persulfide intermediate and that acts as a nucleophile towards URM1. Subsequently, a transient disulfide bond is formed. Does not use thiosulfate as sulfur donor; NFS1 probably acting as a sulfur donor for thiocarboxylation reactions. Prior mcm(5) tRNA modification by the elongator complex is required for 2-thiolation. May also be involved in protein urmylation. This is Adenylyltransferase and sulfurtransferase UBA4 from Saccharomyces cerevisiae (strain YJM789) (Baker's yeast).